The chain runs to 631 residues: DNA mismatch repair protein MutL (631 aa).

2 disordered regions span residues 337–362 and 400–429; these read PHSP…ELQS and AVQS…RAEL.

This sequence belongs to the DNA mismatch repair MutL/HexB family.

In terms of biological role, this protein is involved in the repair of mismatches in DNA. It is required for dam-dependent methyl-directed DNA mismatch repair. May act as a 'molecular matchmaker', a protein that promotes the formation of a stable complex between two or more DNA-binding proteins in an ATP-dependent manner without itself being part of a final effector complex. This chain is DNA mismatch repair protein MutL, found in Shewanella oneidensis (strain ATCC 700550 / JCM 31522 / CIP 106686 / LMG 19005 / NCIMB 14063 / MR-1).